The chain runs to 167 residues: Large ribosomal subunit protein bL9 (167 aa).

The protein belongs to the bacterial ribosomal protein bL9 family.

Its function is as follows. Binds to the 23S rRNA. The polypeptide is Large ribosomal subunit protein bL9 (Nitratidesulfovibrio vulgaris (strain ATCC 29579 / DSM 644 / CCUG 34227 / NCIMB 8303 / VKM B-1760 / Hildenborough) (Desulfovibrio vulgaris)).